The chain runs to 514 residues: ATP synthase subunit alpha (514 aa).

170-177 (GDRQIGKT) is an ATP binding site.

This sequence belongs to the ATPase alpha/beta chains family. As to quaternary structure, F-type ATPases have 2 components, CF(1) - the catalytic core - and CF(0) - the membrane proton channel. CF(1) has five subunits: alpha(3), beta(3), gamma(1), delta(1), epsilon(1). CF(0) has three main subunits: a(1), b(2) and c(9-12). The alpha and beta chains form an alternating ring which encloses part of the gamma chain. CF(1) is attached to CF(0) by a central stalk formed by the gamma and epsilon chains, while a peripheral stalk is formed by the delta and b chains.

It localises to the cell inner membrane. The catalysed reaction is ATP + H2O + 4 H(+)(in) = ADP + phosphate + 5 H(+)(out). Functionally, produces ATP from ADP in the presence of a proton gradient across the membrane. The alpha chain is a regulatory subunit. The protein is ATP synthase subunit alpha of Pseudomonas putida (strain W619).